The sequence spans 171 residues: MPLLDSFTVDHTRMEAPAVRVAKTMNTPHGDAITVFDLRFCVPNKEVMPERGIHTLEHLFAGFMRNHLNGNGVEIIDISPMGCRTGFYMSLIGTPDEQRVADAWKAAMEDVLKVQDQNQIPELNVYQCGTYQMHSLQEAQDIARSILERDVRINSNEELALPEEKLQELHI.

The Fe cation site is built by histidine 54, histidine 58, and cysteine 128.

Belongs to the LuxS family. As to quaternary structure, homodimer. Requires Fe cation as cofactor.

The catalysed reaction is S-(5-deoxy-D-ribos-5-yl)-L-homocysteine = (S)-4,5-dihydroxypentane-2,3-dione + L-homocysteine. Functionally, involved in the synthesis of autoinducer 2 (AI-2) which is secreted by bacteria and is used to communicate both the cell density and the metabolic potential of the environment. The regulation of gene expression in response to changes in cell density is called quorum sensing. Catalyzes the transformation of S-ribosylhomocysteine (RHC) to homocysteine (HC) and 4,5-dihydroxy-2,3-pentadione (DPD). The protein is S-ribosylhomocysteine lyase of Escherichia coli (strain 55989 / EAEC).